Here is a 299-residue protein sequence, read N- to C-terminus: Oxygen-dependent coproporphyrinogen-III oxidase (299 aa).

Residue Ser-92 coordinates substrate. The a divalent metal cation site is built by His-96 and His-106. His-106 serves as the catalytic Proton donor. 108-110 (NVR) is a binding site for substrate. Residues His-145 and His-175 each contribute to the a divalent metal cation site. The important for dimerization stretch occupies residues 239 to 274 (YVEFNLVYDRGTLFGLQSGGRAESILMSLPPRVRWE). 257-259 (GGR) serves as a coordination point for substrate.

It belongs to the aerobic coproporphyrinogen-III oxidase family. Homodimer. It depends on a divalent metal cation as a cofactor.

It localises to the cytoplasm. The catalysed reaction is coproporphyrinogen III + O2 + 2 H(+) = protoporphyrinogen IX + 2 CO2 + 2 H2O. It participates in porphyrin-containing compound metabolism; protoporphyrin-IX biosynthesis; protoporphyrinogen-IX from coproporphyrinogen-III (O2 route): step 1/1. In terms of biological role, involved in the heme biosynthesis. Catalyzes the aerobic oxidative decarboxylation of propionate groups of rings A and B of coproporphyrinogen-III to yield the vinyl groups in protoporphyrinogen-IX. The sequence is that of Oxygen-dependent coproporphyrinogen-III oxidase from Xanthomonas axonopodis pv. citri (strain 306).